A 1148-amino-acid polypeptide reads, in one-letter code: Alpha-mannosidase 2 (1148 aa).

Residues 1–5 (MKLSR) are Cytoplasmic-facing. Residues 6 to 26 (QFTVFGSAIFCVVIFSLYLML) form a helical; Signal-anchor for type II membrane protein membrane-spanning segment. Residues 27–1148 (DRGHLDYPRG…EISTSRIRLR (1122 aa)) are Lumenal-facing. 2 positions are modified to phosphoserine: S80 and S82. An N-linked (GlcNAc...) asparagine glycan is attached at N93. Positions 174, 176, 288, and 568 each coordinate Zn(2+). D288 functions as the Nucleophile in the catalytic mechanism. Positions 1121 to 1148 (MHSPPDAQNTSEVSLSPMEISTSRIRLR) are disordered.

This sequence belongs to the glycosyl hydrolase 38 family. As to quaternary structure, homodimer; disulfide-linked. Zn(2+) is required as a cofactor. Glycosylated. Liver.

It is found in the golgi apparatus membrane. It carries out the reaction N(4)-{beta-D-GlcNAc-(1-&gt;2)-alpha-D-Man-(1-&gt;3)-[alpha-D-Man-(1-&gt;3)-[alpha-D-Man-(1-&gt;6)]-alpha-D-Man-(1-&gt;6)]-beta-D-Man-(1-&gt;4)-beta-D-GlcNAc-(1-&gt;4)-beta-D-GlcNAc}-L-asparaginyl-[protein] + 2 H2O = 2 alpha-D-mannopyranose + an N(4)-{beta-D-GlcNAc-(1-&gt;2)-alpha-D-Man-(1-&gt;3)-[alpha-D-Man-(1-&gt;6)]-beta-D-Man-(1-&gt;4)-beta-D-GlcNAc-(1-&gt;4)-beta-D-GlcNAc}-L-asparaginyl-[protein]. The protein operates within protein modification; protein glycosylation. Inhibited by swainsonine. Functionally, catalyzes the first committed step in the biosynthesis of complex N-glycans. It controls conversion of high mannose to complex N-glycans; the final hydrolytic step in the N-glycan maturation pathway. The chain is Alpha-mannosidase 2 (Man2a1) from Rattus norvegicus (Rat).